The following is a 365-amino-acid chain: uncharacterized protein (365 aa).

Disordered stretches follow at residues 119 to 157 (ERSR…QQES), 216 to 298 (RPPG…DISH), and 313 to 365 (SHHH…LSVG). Residues 326 to 340 (SDPRIESRDLPERPQ) show a composition bias toward basic and acidic residues.

This is an uncharacterized protein from Homo sapiens (Human).